A 52-amino-acid polypeptide reads, in one-letter code: MPVEEVVKVSRNYQVTIPAKVRQKFPVKEGDLVKVIYDENGGVVKIQILDSP.

In terms of domain architecture, SpoVT-AbrB spans 4–51 (EEVVKVSRNYQVTIPAKVRQKFPVKEGDLVKVIYDENGGVVKIQILDS).

The chain is Repressor-like protein SSo7c3 from Saccharolobus solfataricus (strain ATCC 35092 / DSM 1617 / JCM 11322 / P2) (Sulfolobus solfataricus).